The chain runs to 319 residues: Cobalamin biosynthesis protein CbiB (319 aa).

The next 5 helical transmembrane spans lie at 52-74, 79-101, 155-177, 207-229, and 296-318; these read IGGG…GVLA, IHPW…GRSL, GIIA…YKAV, YLPA…LSGW, and LMWV…LSGV.

It belongs to the CobD/CbiB family.

The protein localises to the cell membrane. The protein operates within cofactor biosynthesis; adenosylcobalamin biosynthesis; adenosylcobalamin from cob(II)yrinate a,c-diamide: step 4/7. In terms of biological role, converts cobyric acid to cobinamide by the addition of aminopropanol on the F carboxylic group. However, the true cosubstrate could be (R)-1-amino-2-propanol O-2-phosphate, leading to cobinamide phosphate. This chain is Cobalamin biosynthesis protein CbiB, found in Salmonella typhi.